The chain runs to 118 residues: Ribonuclease P protein component (118 aa).

Belongs to the RnpA family. Consists of a catalytic RNA component (M1 or rnpB) and a protein subunit.

It carries out the reaction Endonucleolytic cleavage of RNA, removing 5'-extranucleotides from tRNA precursor.. In terms of biological role, RNaseP catalyzes the removal of the 5'-leader sequence from pre-tRNA to produce the mature 5'-terminus. It can also cleave other RNA substrates such as 4.5S RNA. The protein component plays an auxiliary but essential role in vivo by binding to the 5'-leader sequence and broadening the substrate specificity of the ribozyme. The polypeptide is Ribonuclease P protein component (Shewanella oneidensis (strain ATCC 700550 / JCM 31522 / CIP 106686 / LMG 19005 / NCIMB 14063 / MR-1)).